The chain runs to 119 residues: Large ribosomal subunit protein bL20 (119 aa).

It belongs to the bacterial ribosomal protein bL20 family.

In terms of biological role, binds directly to 23S ribosomal RNA and is necessary for the in vitro assembly process of the 50S ribosomal subunit. It is not involved in the protein synthesizing functions of that subunit. The sequence is that of Large ribosomal subunit protein bL20 from Verminephrobacter eiseniae (strain EF01-2).